The following is a 151-amino-acid chain: MQRANIILLSLILMGYLAESALLATAGCILLVMRLSKLNRLMFLLERRGLEVGLIFLMLSVLVPLAHDNIVYKELVMKTLSPQGLLALIGGTLATHMNGEGLKLLKLDPQLIFGMVIGSLIGIVFLGGIPIGPLMAAGLTALFLEVIYWFK.

The next 4 helical transmembrane spans lie at I6–A26, V52–Y72, L75–T95, and L111–I131.

This sequence belongs to the UPF0756 family.

The protein resides in the cell membrane. In Desulforamulus reducens (strain ATCC BAA-1160 / DSM 100696 / MI-1) (Desulfotomaculum reducens), this protein is UPF0756 membrane protein Dred_1097.